Consider the following 159-residue polypeptide: SsrA-binding protein (159 aa).

Positions 138-159 (KRDTLKDKDWQRQKERMMKHSV) are disordered.

The protein belongs to the SmpB family.

It localises to the cytoplasm. Functionally, required for rescue of stalled ribosomes mediated by trans-translation. Binds to transfer-messenger RNA (tmRNA), required for stable association of tmRNA with ribosomes. tmRNA and SmpB together mimic tRNA shape, replacing the anticodon stem-loop with SmpB. tmRNA is encoded by the ssrA gene; the 2 termini fold to resemble tRNA(Ala) and it encodes a 'tag peptide', a short internal open reading frame. During trans-translation Ala-aminoacylated tmRNA acts like a tRNA, entering the A-site of stalled ribosomes, displacing the stalled mRNA. The ribosome then switches to translate the ORF on the tmRNA; the nascent peptide is terminated with the 'tag peptide' encoded by the tmRNA and targeted for degradation. The ribosome is freed to recommence translation, which seems to be the essential function of trans-translation. The protein is SsrA-binding protein of Alteromonas mediterranea (strain DSM 17117 / CIP 110805 / LMG 28347 / Deep ecotype).